Here is a 296-residue protein sequence, read N- to C-terminus: Factor associated with metabolism and energy (296 aa).

G2 carries the N-myristoyl glycine lipid modification. 2 stretches are compositionally biased toward basic and acidic residues: residues 173–187 and 267–281; these read SLHG…SPRD and EQGK…LVRT. Disordered stretches follow at residues 173-204 and 256-281; these read SLHG…DDHD and LLWD…LVRT.

It localises to the cell membrane. Its subcellular location is the cytoplasmic vesicle. Functionally, may be involved in tuning the metabolism, energy expenditure, and excretion processes. The polypeptide is Factor associated with metabolism and energy (Homo sapiens (Human)).